The sequence spans 118 residues: NAD(P)H-quinone oxidoreductase subunit M (118 aa).

This sequence belongs to the complex I NdhM subunit family. NDH-1 can be composed of about 15 different subunits; different subcomplexes with different compositions have been identified which probably have different functions.

The protein localises to the cellular thylakoid membrane. The enzyme catalyses a plastoquinone + NADH + (n+1) H(+)(in) = a plastoquinol + NAD(+) + n H(+)(out). The catalysed reaction is a plastoquinone + NADPH + (n+1) H(+)(in) = a plastoquinol + NADP(+) + n H(+)(out). NDH-1 shuttles electrons from an unknown electron donor, via FMN and iron-sulfur (Fe-S) centers, to quinones in the respiratory and/or the photosynthetic chain. The immediate electron acceptor for the enzyme in this species is believed to be plastoquinone. Couples the redox reaction to proton translocation, and thus conserves the redox energy in a proton gradient. Cyanobacterial NDH-1 also plays a role in inorganic carbon-concentration. The chain is NAD(P)H-quinone oxidoreductase subunit M from Trichormus variabilis (strain ATCC 29413 / PCC 7937) (Anabaena variabilis).